The chain runs to 218 residues: Riboflavin synthase (218 aa).

Lumazine-binding repeat units lie at residues 1–97 and 98–194; these read MFTG…FGGH and IVSG…ERLL. 2,4-dihydroxypteridine-binding positions include 4 to 6, 48 to 50, 62 to 67, 101 to 103, K136, 145 to 147, and 159 to 164; these read GII, CLT, DLSIET, GHV, SLT, and TIVPHT.

Homotrimer.

The catalysed reaction is 2 6,7-dimethyl-8-(1-D-ribityl)lumazine + H(+) = 5-amino-6-(D-ribitylamino)uracil + riboflavin. It functions in the pathway cofactor biosynthesis; riboflavin biosynthesis; riboflavin from 2-hydroxy-3-oxobutyl phosphate and 5-amino-6-(D-ribitylamino)uracil: step 2/2. In terms of biological role, catalyzes the dismutation of two molecules of 6,7-dimethyl-8-ribityllumazine, resulting in the formation of riboflavin and 5-amino-6-(D-ribitylamino)uracil. The protein is Riboflavin synthase of Photobacterium phosphoreum.